Reading from the N-terminus, the 199-residue chain is ATP-dependent Clp protease proteolytic subunit (199 aa).

The disordered stretch occupies residues 1 to 23 (MTTSAARKGLRTRGSACPRATRS). Catalysis depends on serine 100, which acts as the Nucleophile. Histidine 125 is a catalytic residue.

It belongs to the peptidase S14 family. As to quaternary structure, fourteen ClpP subunits assemble into 2 heptameric rings which stack back to back to give a disk-like structure with a central cavity, resembling the structure of eukaryotic proteasomes.

The protein localises to the cytoplasm. The enzyme catalyses Hydrolysis of proteins to small peptides in the presence of ATP and magnesium. alpha-casein is the usual test substrate. In the absence of ATP, only oligopeptides shorter than five residues are hydrolyzed (such as succinyl-Leu-Tyr-|-NHMec, and Leu-Tyr-Leu-|-Tyr-Trp, in which cleavage of the -Tyr-|-Leu- and -Tyr-|-Trp bonds also occurs).. Cleaves peptides in various proteins in a process that requires ATP hydrolysis. Has a chymotrypsin-like activity. Plays a major role in the degradation of misfolded proteins. The chain is ATP-dependent Clp protease proteolytic subunit from Paracoccus denitrificans.